A 698-amino-acid chain; its full sequence is Elongation factor G (698 aa).

The 277-residue stretch at 8-284 (ANVRNIGIMA…AVVDYLPSPL (277 aa)) folds into the tr-type G domain. GTP-binding positions include 17–24 (AHIDAGKT), 81–85 (DTPGH), and 135–138 (NKLD).

It belongs to the TRAFAC class translation factor GTPase superfamily. Classic translation factor GTPase family. EF-G/EF-2 subfamily.

The protein resides in the cytoplasm. In terms of biological role, catalyzes the GTP-dependent ribosomal translocation step during translation elongation. During this step, the ribosome changes from the pre-translocational (PRE) to the post-translocational (POST) state as the newly formed A-site-bound peptidyl-tRNA and P-site-bound deacylated tRNA move to the P and E sites, respectively. Catalyzes the coordinated movement of the two tRNA molecules, the mRNA and conformational changes in the ribosome. This Salinispora tropica (strain ATCC BAA-916 / DSM 44818 / JCM 13857 / NBRC 105044 / CNB-440) protein is Elongation factor G.